We begin with the raw amino-acid sequence, 218 residues long: Guanylate kinase (218 aa).

The Guanylate kinase-like domain maps to 10–190 (GLLIILSSPS…TEERLKTIIT (181 aa)). 17-24 (SPSGAGKS) contacts ATP.

This sequence belongs to the guanylate kinase family.

It localises to the cytoplasm. It carries out the reaction GMP + ATP = GDP + ADP. Essential for recycling GMP and indirectly, cGMP. In Jannaschia sp. (strain CCS1), this protein is Guanylate kinase.